Consider the following 740-residue polypeptide: MWELVETVRSMLNSLHDGEISVSAYDTAWVARVPALDGSNKPQFPMCLNWIMNNQLEDGSWGDRDLFLTYDRICSALACAIALKTWNTGDKIVHKALEFIRKTMPKMELEDSTHMPIGFEIVFPAMIEEAMALELDIDYREPVLQTIYAERKKKLERIPMNVVQNYPTTLLHSLEGLHKTIDWDKVIKLQSPDGSLLFSPASTACALMHTGNEKCLQYLNNLVKRFNCAVPNVYPVDLFEHLWIVDRLQRLGISRYFTQEIKSALDYVYRYWTDKGIAWARGSPVQDADDTSMAFRLLRSHGYDISPDAFKTFQEGDSFVCFSGQAGQAVTGMYNLYRASQVMFPGETILEEAGSFARKFLEGKRQENQLYDKWIISKDLPGEVEFALDNPMHARLERLATRRYIDQYAADDVWIGKSLYRMPFVNNPIFLELAKADFNMCRALHRKEFQQLERWYDESSLSMFKGFSRSKLEQTFYSAAATIFEPELSPARLIWSQCWFISLGINEYFDHQGSTKELEDLINNVERWNVNSLGNCSAEVKILFVELYNIVQNHSKQGFLYQGRSIGGALREIWKTWLSSLLQRTKWKMSDNNPTLEEYLKASHSSIEPAVRSTMYFVGETLATTGDIKDSAICQMMNTASRLVQDTHTDKVDSSLNSITIYLEENPQLTKSEALSEVQALANKNMQKLLYETLQPGALPQACKQLFLNAARIMNVFPGTNKVQAKLSNHVKRVLSQPVL.

Lysine 154 contacts substrate. Residues aspartate 287 and aspartate 289 each contribute to the Mg(2+) site. The short motif at 287–290 (DADD) is the DXDD motif element. Lysine 373 contributes to the substrate binding site.

This sequence belongs to the terpene synthase family. Requires Mg(2+) as cofactor.

The enzyme catalyses (2E,6E,10E)-geranylgeranyl diphosphate = (+)-copalyl diphosphate. It functions in the pathway secondary metabolite biosynthesis; terpenoid biosynthesis. Monofunctional diterpene synthase converting geranylgeranyl diphosphate to copalyl diphosphate. This is Copalyl diphosphate synthase 2 (CPS2) from Selaginella moellendorffii (Spikemoss).